The primary structure comprises 256 residues: Protein crossbronx-like (256 aa).

Positions 17 to 179 constitute a UBC core domain; sequence NQGYQVLAEY…AKASIVWSWK (163 aa).

Belongs to the ubiquitin-conjugating enzyme family. FTS subfamily.

The polypeptide is Protein crossbronx-like (Drosophila mojavensis (Fruit fly)).